The sequence spans 580 residues: tRNA-guanine(15) transglycosylase (580 aa).

Residue aspartate 91 is the Nucleophile of the active site. The substrate site is built by aspartate 126 and alanine 192. Zn(2+) is bound by residues cysteine 275, cysteine 277, and cysteine 280. The 76-residue stretch at 504 to 579 folds into the PUA domain; the sequence is RMRVVVDEDA…LAVKVRRGVE (76 aa).

This sequence belongs to the archaeosine tRNA-ribosyltransferase family. Requires Zn(2+) as cofactor.

It catalyses the reaction guanosine(15) in tRNA + 7-cyano-7-deazaguanine = 7-cyano-7-carbaguanosine(15) in tRNA + guanine. The protein operates within tRNA modification; archaeosine-tRNA biosynthesis. In terms of biological role, exchanges the guanine residue with 7-cyano-7-deazaguanine (preQ0) at position 15 in the dihydrouridine loop (D-loop) of archaeal tRNAs. The sequence is that of tRNA-guanine(15) transglycosylase from Thermococcus onnurineus (strain NA1).